We begin with the raw amino-acid sequence, 212 residues long: Stringent starvation protein A (212 aa).

One can recognise a GST N-terminal domain in the interval 9–87 (SVMTLFSGPT…YLDERFPHPP (79 aa)). In terms of domain architecture, GST C-terminal spans 92 to 209 (YPVARGESRL…LTEAEREMRL (118 aa)).

The protein belongs to the GST superfamily. HSP26 family.

Its function is as follows. Forms an equimolar complex with the RNA polymerase holoenzyme (RNAP) but not with the core enzyme. The chain is Stringent starvation protein A (sspA) from Escherichia coli O157:H7.